Consider the following 104-residue polypeptide: L-rhamnose mutarotase (104 aa).

Tyr18 is a binding site for substrate. The Proton donor role is filled by His22. Residues Tyr41 and 76 to 77 (WW) contribute to the substrate site.

The protein belongs to the rhamnose mutarotase family. As to quaternary structure, homodimer.

It localises to the cytoplasm. The enzyme catalyses alpha-L-rhamnose = beta-L-rhamnose. Its pathway is carbohydrate metabolism; L-rhamnose metabolism. In terms of biological role, involved in the anomeric conversion of L-rhamnose. The chain is L-rhamnose mutarotase from Burkholderia ambifaria (strain MC40-6).